The chain runs to 381 residues: Probable serine/threonine-protein kinase PBL21 (381 aa).

The S-palmitoyl cysteine moiety is linked to residue Cys-3. The region spanning 78 to 354 is the Protein kinase domain; the sequence is FREVNLLGEG…GDIVVALEYL (277 aa). Residues 84–92 and Lys-106 each bind ATP; that span reads LGEGGFGRV. The active-site Proton acceptor is the Asp-204. The interval 362–381 is disordered; that stretch reads EARNVSSPSPEISRTPRRDL.

It belongs to the protein kinase superfamily. Ser/Thr protein kinase family. In terms of processing, palmitoylation at Cys-3 and Cys-7 are required for plasma membrane location.

It localises to the cell membrane. The catalysed reaction is L-seryl-[protein] + ATP = O-phospho-L-seryl-[protein] + ADP + H(+). It carries out the reaction L-threonyl-[protein] + ATP = O-phospho-L-threonyl-[protein] + ADP + H(+). May be involved in plant defense signaling. This chain is Probable serine/threonine-protein kinase PBL21, found in Arabidopsis thaliana (Mouse-ear cress).